The primary structure comprises 466 residues: UDP-N-acetylmuramate--L-alanine ligase (466 aa).

ATP is bound at residue 117-123 (GTHGKTT).

The protein belongs to the MurCDEF family.

It is found in the cytoplasm. The enzyme catalyses UDP-N-acetyl-alpha-D-muramate + L-alanine + ATP = UDP-N-acetyl-alpha-D-muramoyl-L-alanine + ADP + phosphate + H(+). The protein operates within cell wall biogenesis; peptidoglycan biosynthesis. Functionally, cell wall formation. The sequence is that of UDP-N-acetylmuramate--L-alanine ligase from Streptomyces griseus subsp. griseus (strain JCM 4626 / CBS 651.72 / NBRC 13350 / KCC S-0626 / ISP 5235).